We begin with the raw amino-acid sequence, 441 residues long: Baicalein 7-O-glucuronosyltransferase (441 aa).

It belongs to the UDP-glycosyltransferase family. In terms of assembly, homodimer.

It carries out the reaction baicalein + UDP-alpha-D-glucuronate = baicalin + UDP. Inhibited by copper, zinc and iron, p-Chloromercuri-benzoic acid (PCMBA) and 4,4'-diisothiocyanostilbene-2,2'-disulfonic acid (DIDS), but not by N-ethylmaleimide (NEM), dithioerythritol (DTE), calcium or magnesium. Its function is as follows. Involved in the production of glucuronosylated baicalein, a flavonoid that shows antiallergic, anti-HIV and antitumor activities. Can use baicalein, scutellarein and wogonin as substrates, but not chrysin, apigenin, luteolin, quercetin, formononetin and daidzein. Highly specific for UDP-glucuronate (UDP-GlcUA) and no activity with UDP-glucose or UDP-galacturonic acid. The polypeptide is Baicalein 7-O-glucuronosyltransferase (UBGAT-I) (Scutellaria baicalensis (Baical skullcap)).